Here is a 55-residue protein sequence, read N- to C-terminus: Large ribosomal subunit protein bL33 (55 aa).

This sequence belongs to the bacterial ribosomal protein bL33 family.

In Aliivibrio salmonicida (strain LFI1238) (Vibrio salmonicida (strain LFI1238)), this protein is Large ribosomal subunit protein bL33.